Consider the following 326-residue polypeptide: Type II secretion system protein K (326 aa).

The propeptide at 1–7 (MNHRQRG) is leader sequence. The chain crosses the membrane as a helical span at residues 8-28 (IALLMVLLILALMMVLASAMT). Over 29 to 326 (ERSARMYQQT…RYGIYWVADE (298 aa)) the chain is Periplasmic.

The protein belongs to the GSP K family. Type II secretion is composed of four main components: the outer membrane complex, the inner membrane complex, the cytoplasmic secretion ATPase and the periplasm-spanning pseudopilus. Interacts with core component PulG. Post-translationally, cleaved by prepilin peptidase.

The protein localises to the cell inner membrane. Its function is as follows. Component of the type II secretion system required for the energy-dependent secretion of extracellular factors such as proteases and toxins from the periplasm. Plays a role in pseudopilus assembly and seems to control its length. Interacts with the pseudopilus tip complex that is critical for the recognition and binding of secretion substrates. This Klebsiella pneumoniae protein is Type II secretion system protein K (pulK).